A 2599-amino-acid chain; its full sequence is Non-reducing polyketide synthase azaA (2599 aa).

The tract at residues 95–231 (PNILLSPMVV…AARSISSLQQ (137 aa)) is N-terminal acylcarrier protein transacylase domain (SAT). The Nucleophile; for transacylase activity role is filled by cysteine 132. The Proton donor/acceptor; for transacylase activity role is filled by histidine 250. Positions 372 to 790 (PNEIAVIGMS…GSNASMVVAQ (419 aa)) constitute a Ketosynthase family 3 (KS3) domain. Catalysis depends on for beta-ketoacyl synthase activity residues cysteine 539, histidine 674, and histidine 713. The malonyl-CoA:ACP transacylase (MAT) domain stretch occupies residues 902–1193 (FGGQISNYVG…ITSMASRALG (292 aa)). Positions 1282 to 1413 (PKTLWSLIEA…GKLAFLSGQD (132 aa)) are N-terminal hotdog fold. Positions 1282–1591 (PKTLWSLIEA…YHKVAKASMS (310 aa)) constitute a PKS/mFAS DH domain. Residues 1310-1589 (LVSGHVIANT…INYHKVAKAS (280 aa)) are product template (PT) domain. The active-site Proton acceptor; for dehydratase activity is histidine 1314. Positions 1443–1591 (ADDIIQGRNI…YHKVAKASMS (149 aa)) are C-terminal hotdog fold. Aspartate 1499 (proton donor; for dehydratase activity) is an active-site residue. Positions 1601 to 1652 (EAAPSSSTRAHPTSSSSPRLPGPFVPEDKSQNETQTAGTNAVAKKKSEKSAQ) are disordered. The span at 1602 to 1619 (AAPSSSTRAHPTSSSSPR) shows a compositional bias: low complexity. In terms of domain architecture, Carrier spans 1653–1727 (QNVLDKTRAL…GLVEYVQSAV (75 aa)). O-(pantetheine 4'-phosphoryl)serine is present on serine 1687. Residues 1749-1779 (NLAASPSSSSSSTNLTEDSSLDPTETTTNIS) form a disordered region. The span at 1750–1766 (LAASPSSSSSSTNLTED) shows a compositional bias: low complexity. The segment covering 1769–1779 (LDPTETTTNIS) has biased composition (polar residues). The methyltransferase domain stretch occupies residues 1952–2140 (DSLLNKLSYR…VGYGQVDWTD (189 aa)). The NADPH-binding (R) domain stretch occupies residues 2222–2467 (ITGATGSLGV…LCWTPVNDVA (246 aa)).

It depends on pantetheine 4'-phosphate as a cofactor.

The protein operates within secondary metabolite biosynthesis. Non-reducing polyketide synthase; part of the gene cluster that mediates the biosynthesis of azaphilones, a class of fungal metabolites characterized by a highly oxygenated pyrano-quinone bicyclic core and exhibiting a broad range of bioactivities. In the first step, the non-reducing polyketide synthase azaA forms the hexaketide precursor from successive condensations of five malonyl-CoA units, presumably with a simple acetyl-CoA starter unit. The reactive polyketide chain then undergoes a PT-mediated C2-C7 cyclization to afford the aromatic ring and is eventually released as an aldehyde through the R-domain. The putative ketoreductase azaE is proposed to catalyze the reduction of the terminal ketone resulting in the early culture product FK17-P2a. The monooxygenase azaH was demonstrated to be the only enzyme required to convert FK17-P2a to azanigerone E. AzaH first hydroxylates the benzaldehyde intermediate FK17-P2a at C4, which triggers the formation of the pyran-ring to afford azanigerone E. In parallel, the 2,4-dimethylhexanoyl chain is synthesized by the HR-PKS azaB and is proposed to be transferred to the C4-hydroxyl of azanigerone E by the acyltransferase azaD directly from the ACP domain of azaB. Alternatively, the 2,4-dimethyl-hexanoyl chain may be offloaded from the HR-PKS as a carboxylic acid and converted to an acyl-CoA by azaF. The resulting acyl-CoA molecule could then be taken up as a substrate by AzaD to form azanigerone B. To yield the carboxylic acid substituent in azanigerone A, the hydroxypropyl side chain of azanigerone B would need to undergo a C-C oxidative cleavage catalyzed by cytochrome P450 AzaI. AzaI is proposed to act on a vicinal diol that leads to a C-C bond scission either through an alkoxyradical intermediate or a peroxy complex. In the biosynthesis of azanigerone A, azanigerone B first undergoes hydroxylation at C10, possibly catalyzed by one of the two FAD-dependent monooxygenases encoded in the cluster, azaG or azaL, resulting in the vicinal diol azanigerone C. Oxidative cleavage of azanigerone C by azaI would yield the corresponding aldehyde derivative of azanigerone A. Finally, the dehydrogenase azaJ is proposed to convert the aldehyde functional group into the carboxylic acid, completing the conversion from azanigerone B to azanigerone A. Alternatively, the oxidation of aldehyde to carboxylic acid may be catalyzed by the same P450 enzyme azaI via consecutive oxidation or by endogenous alcohol dehydrogenase. This is Non-reducing polyketide synthase azaA from Aspergillus niger (strain ATCC 1015 / CBS 113.46 / FGSC A1144 / LSHB Ac4 / NCTC 3858a / NRRL 328 / USDA 3528.7).